A 122-amino-acid chain; its full sequence is Large ribosomal subunit protein uL14 (122 aa).

This sequence belongs to the universal ribosomal protein uL14 family. Part of the 50S ribosomal subunit. Forms a cluster with proteins L3 and L19. In the 70S ribosome, L14 and L19 interact and together make contacts with the 16S rRNA in bridges B5 and B8.

Its function is as follows. Binds to 23S rRNA. Forms part of two intersubunit bridges in the 70S ribosome. The protein is Large ribosomal subunit protein uL14 of Lactobacillus helveticus (strain DPC 4571).